Consider the following 231-residue polypeptide: Beta-casein (231 aa).

The signal sequence occupies residues 1–15 (MKVFILACLVALALA). The residue at position 24 (Ser24) is a Phosphoserine. Residue Thr27 is modified to Phosphothreonine. Phosphoserine occurs at positions 29, 31, and 32.

Belongs to the beta-casein family. In terms of tissue distribution, mammary gland specific. Secreted in milk.

The protein resides in the secreted. Its function is as follows. Important role in determination of the surface properties of the casein micelles. The polypeptide is Beta-casein (Csn2) (Rattus norvegicus (Rat)).